A 365-amino-acid chain; its full sequence is Flagellar P-ring protein (365 aa).

The signal sequence occupies residues 1 to 19 (MIKFLSALILLLVTTAAQA).

The protein belongs to the FlgI family. The basal body constitutes a major portion of the flagellar organelle and consists of four rings (L,P,S, and M) mounted on a central rod.

Its subcellular location is the periplasm. It is found in the bacterial flagellum basal body. Functionally, assembles around the rod to form the L-ring and probably protects the motor/basal body from shearing forces during rotation. The sequence is that of Flagellar P-ring protein from Shigella flexneri serotype 5b (strain 8401).